The sequence spans 709 residues: Disintegrin and metalloproteinase domain-containing protein 5 (709 aa).

Positions 1–98 (MKTPISSILK…TLSGFIHVIY (98 aa)) are excised as a propeptide. The Extracellular portion of the chain corresponds to 1-649 (MKTPISSILK…QQNRGIHPKQ (649 aa)). Residues 141–334 (RYIKTDIVVD…QDLECLQDLP (194 aa)) form the Peptidase M12B domain. 7 disulfide bridges follow: Cys247–Cys329, Cys289–Cys314, Cys291–Cys296, Cys406–Cys426, Cys585–Cys597, Cys591–Cys603, and Cys605–Cys614. Positions 346 to 434 (RRICGNGILE…YCVPDTFARN (89 aa)) constitute a Disintegrin domain. Residues 581–615 (DFQQCNTSRDCNDHGVCNNFNHCHCDKGYNPPYCE) form the EGF-like; calcium-binding domain. A helical membrane pass occupies residues 650–670 (QLQLILYITLPLIMIISAVFI). Residues 671-709 (KQSKLSRLCGRERSEGTSCITEDSVSNTKMTTNEGSTLH) lie on the Cytoplasmic side of the membrane. Positions 690 to 709 (ITEDSVSNTKMTTNEGSTLH) are disordered.

As to quaternary structure, interacts with TEX101. In terms of tissue distribution, detected in testis.

The protein resides in the membrane. Its function is as follows. This is a non catalytic metalloprotease-like protein. May play a role in sperm-egg fusion. The polypeptide is Disintegrin and metalloproteinase domain-containing protein 5 (Adam5) (Rattus norvegicus (Rat)).